The sequence spans 348 residues: Holliday junction branch migration complex subunit RuvB (348 aa).

The tract at residues T4–Y184 is large ATPase domain (RuvB-L). Residues I23, R24, G65, K68, T69, T70, E131 to F133, R174, Y184, and R221 contribute to the ATP site. T69 is a Mg(2+) binding site. Residues S185–D255 form a small ATPAse domain (RuvB-S) region. Positions E258–E348 are head domain (RuvB-H). Residues R294, R313, and R318 each coordinate DNA.

The protein belongs to the RuvB family. As to quaternary structure, homohexamer. Forms an RuvA(8)-RuvB(12)-Holliday junction (HJ) complex. HJ DNA is sandwiched between 2 RuvA tetramers; dsDNA enters through RuvA and exits via RuvB. An RuvB hexamer assembles on each DNA strand where it exits the tetramer. Each RuvB hexamer is contacted by two RuvA subunits (via domain III) on 2 adjacent RuvB subunits; this complex drives branch migration. In the full resolvosome a probable DNA-RuvA(4)-RuvB(12)-RuvC(2) complex forms which resolves the HJ.

The protein resides in the cytoplasm. The catalysed reaction is ATP + H2O = ADP + phosphate + H(+). The RuvA-RuvB-RuvC complex processes Holliday junction (HJ) DNA during genetic recombination and DNA repair, while the RuvA-RuvB complex plays an important role in the rescue of blocked DNA replication forks via replication fork reversal (RFR). RuvA specifically binds to HJ cruciform DNA, conferring on it an open structure. The RuvB hexamer acts as an ATP-dependent pump, pulling dsDNA into and through the RuvAB complex. RuvB forms 2 homohexamers on either side of HJ DNA bound by 1 or 2 RuvA tetramers; 4 subunits per hexamer contact DNA at a time. Coordinated motions by a converter formed by DNA-disengaged RuvB subunits stimulates ATP hydrolysis and nucleotide exchange. Immobilization of the converter enables RuvB to convert the ATP-contained energy into a lever motion, pulling 2 nucleotides of DNA out of the RuvA tetramer per ATP hydrolyzed, thus driving DNA branch migration. The RuvB motors rotate together with the DNA substrate, which together with the progressing nucleotide cycle form the mechanistic basis for DNA recombination by continuous HJ branch migration. Branch migration allows RuvC to scan DNA until it finds its consensus sequence, where it cleaves and resolves cruciform DNA. The protein is Holliday junction branch migration complex subunit RuvB of Pseudomonas entomophila (strain L48).